The following is a 182-amino-acid chain: Ribulose bisphosphate carboxylase small subunit, chloroplastic 4 (182 aa).

The transit peptide at 1–41 (MAATMMNKTVVLSKGCTKPSAVPKVSINRKGFLNTAMNKKR) directs the protein to the chloroplast.

It belongs to the RuBisCO small chain family. Heterohexadecamer of 8 large and 8 small subunits.

The protein localises to the plastid. It localises to the chloroplast. Its function is as follows. RuBisCO catalyzes two reactions: the carboxylation of D-ribulose 1,5-bisphosphate, the primary event in carbon dioxide fixation, as well as the oxidative fragmentation of the pentose substrate. Both reactions occur simultaneously and in competition at the same active site. Although the small subunit is not catalytic it is essential for maximal activity. This Acetabularia peniculus (Green alga) protein is Ribulose bisphosphate carboxylase small subunit, chloroplastic 4.